The chain runs to 296 residues: Protein csh3 (296 aa).

The disordered stretch occupies residues 46-138 (ASPVTAPAAQ…PPSYPGPNTA (93 aa)). Over residues 93-103 (GEKRTPEEPRK) the composition is skewed to basic and acidic residues. The span at 111–124 (QKQSEASSVNSSTE) shows a compositional bias: polar residues. One can recognise an SH3 domain in the interval 140-199 (KNVERVLAMYDFPGPDAGDLGFHAGEVIIVLEHVNNDWWRGELNGKEGIFPSNYVRLLED). The interval 202–246 (VKAQPPPPPPQQNYPPAASSSAPPMQYQQTAYPPQQAPYPPVQAY) is disordered. Residues 205–214 (QPPPPPPQQN) are compositionally biased toward pro residues. The segment covering 215-235 (YPPAASSSAPPMQYQQTAYPP) has biased composition (low complexity).

The sequence is that of Protein csh3 (csh3) from Schizosaccharomyces pombe (strain 972 / ATCC 24843) (Fission yeast).